We begin with the raw amino-acid sequence, 341 residues long: Methionine import ATP-binding protein MetN (341 aa).

One can recognise an ABC transporter domain in the interval 2-237; it reads IELCGLKKSF…PESLARKMLY (236 aa). 34-41 contributes to the ATP binding site; sequence GKSGAGKS.

Belongs to the ABC transporter superfamily. Methionine importer (TC 3.A.1.24) family. In terms of assembly, the complex is composed of two ATP-binding proteins (MetN), two transmembrane proteins (MetI) and a solute-binding protein (MetQ).

The protein resides in the cell inner membrane. The enzyme catalyses L-methionine(out) + ATP + H2O = L-methionine(in) + ADP + phosphate + H(+). It carries out the reaction D-methionine(out) + ATP + H2O = D-methionine(in) + ADP + phosphate + H(+). In terms of biological role, part of the ABC transporter complex MetNIQ involved in methionine import. Responsible for energy coupling to the transport system. In Legionella pneumophila (strain Lens), this protein is Methionine import ATP-binding protein MetN.